Reading from the N-terminus, the 115-residue chain is Promotilin (115 aa).

A signal peptide spans 1-25; sequence MLSRKATAVLLAVHAAAMLASQTEA. A disordered region spans residues 43–72; that stretch reads RYKGQKKSLSVQQRSEEVGPVDPTEPWEEK.

Belongs to the motilin family.

It localises to the secreted. Its function is as follows. Plays an important role in the regulation of interdigestive gastrointestinal motility and indirectly causes rhythmic contraction of duodenal and colonic smooth muscle. The polypeptide is Promotilin (MLN) (Bos taurus (Bovine)).